We begin with the raw amino-acid sequence, 37 residues long: Large ribosomal subunit protein bL36 (37 aa).

The protein belongs to the bacterial ribosomal protein bL36 family.

The chain is Large ribosomal subunit protein bL36 from Treponema pallidum (strain Nichols).